The following is a 482-amino-acid chain: Reduced viability upon starvation protein 167 (482 aa).

S2 carries the post-translational modification N-acetylserine. Residues 17-254 (FRQKFKMGEQ…YFDLNSDIVE (238 aa)) enclose the BAR domain. Coiled coils occupy residues 31 to 64 (VYEDAERRFQELEQETKKLSEESKRYSTAVNGML) and 174 to 204 (AKDEERLYKAQAQVEVAQQEYDYYNDLLKTQ). A Glycyl lysine isopeptide (Lys-Gly) (interchain with G-Cter in ubiquitin) cross-link involves residue K242. Phosphoserine; by FUS3 and PHO85 occurs at positions 299, 321, and 379. The tract at residues 382–407 (LTGLGFQQSPQQQQGPPPAYSNPLTS) is disordered. One can recognise an SH3 domain in the interval 421–482 (PGVETVTALY…PGNYVQLNKN (62 aa)). K481 is covalently cross-linked (Glycyl lysine isopeptide (Lys-Gly) (interchain with G-Cter in ubiquitin)).

Binds to actin. Interacts with ABP1, GYL1, GYP5, PCL2 and YBR108W. Post-translationally, phosphorylated redundantly by cyclin-dependent kinase PHO85 in association with PCL1,2-type cyclins or by MAP kinase FUS3. Phosphorylation inhibits interaction with complexes involved in actin cytoskeleton function.

Its subcellular location is the cytoplasm. The protein localises to the cytoskeleton. In terms of biological role, component of a cytoskeletal structure that is required for the formation of endocytic vesicles at the plasma membrane level. Could be implicated in cytoskeletal reorganization in response to environmental stresses and could act in the budding site selection mechanism. The polypeptide is Reduced viability upon starvation protein 167 (RVS167) (Saccharomyces cerevisiae (strain ATCC 204508 / S288c) (Baker's yeast)).